Here is a 779-residue protein sequence, read N- to C-terminus: ATP-dependent RNA helicase SUPV3L1, mitochondrial (779 aa).

The N-terminal 40 residues, 1 to 40, are a transit peptide targeting the mitochondrion; sequence MSLPRCTLLWARLPAGRGAGPRAAPCSALRALVGSFPGAS. The residue at position 99 (Lys-99) is an N6-acetyllysine. Positions 194–334 constitute a Helicase ATP-binding domain; the sequence is EARARQRKII…AINLVSELLY (141 aa). 207–214 contacts ATP; the sequence is GPTNSGKT. Residues 353-521 enclose the Helicase C-terminal domain; the sequence is VLDHALESLD…PTAEQIEMFA (169 aa). Positions 650 to 779 are interaction with LAMTOR5, important for protein stability; sequence PDSSLVRSLQ…RRKKKDPDSD (130 aa). Residues 693-703 are compositionally biased toward polar residues; that stretch reads SGDQSRLSGAS. Disordered regions lie at residues 693–732 and 754–779; these read SGDQSRLSGASKSPARRTRGTKSAGNKATEPLSPSDKELP and EWLTQQPEHSREKVGTRRKKKDPDSD. At Ser-725 the chain carries Phosphoserine. Residues 761–779 are compositionally biased toward basic and acidic residues; sequence EHSREKVGTRRKKKDPDSD.

The protein belongs to the helicase family. In terms of assembly, homodimer; in free form. Component of the mitochondrial degradosome (mtEXO) complex which is a heteropentamer containing 2 copies of SUPV3L1 and 3 copies of PNPT1. As part of mitochondrial degradosome complex, interacts with GRSF1 in a RNA-dependent manner; the interaction enhances the activity of the complex. Interacts with LAMTOR5/HBXIP, WRN and BLM. Mg(2+) is required as a cofactor. It depends on Mn(2+) as a cofactor.

It is found in the nucleus. Its subcellular location is the mitochondrion matrix. The protein localises to the mitochondrion nucleoid. The catalysed reaction is ATP + H2O = ADP + phosphate + H(+). With respect to regulation, helicase activity toward DNA substrate is inhibited by micromolar concentrations of 5,6-dichloro-1-(beta-D-ribofuranosyl)benzotriazole (DRBT) and 4,5,6,7-tetrabromobenzotriazole (TBBT). Helicase activity toward RNA substrate is inhibited by elevated concentrations of TBBT. Inhibited by some ring-expanded nucleoside analogs. Major helicase player in mitochondrial RNA metabolism. Component of the mitochondrial degradosome (mtEXO) complex, that degrades 3' overhang double-stranded RNA with a 3'-to-5' directionality in an ATP-dependent manner. Involved in the degradation of non-coding mitochondrial transcripts (MT-ncRNA) and tRNA-like molecules. ATPase and ATP-dependent multisubstrate helicase, able to unwind double-stranded (ds) DNA and RNA, and RNA/DNA heteroduplexes in the 5'-to-3' direction. Plays a role in the RNA surveillance system in mitochondria; regulates the stability of mature mRNAs, the removal of aberrantly formed mRNAs and the rapid degradation of non coding processing intermediates. Also implicated in recombination and chromatin maintenance pathways. May protect cells from apoptosis. Associates with mitochondrial DNA. This chain is ATP-dependent RNA helicase SUPV3L1, mitochondrial (Supv3l1), found in Mus musculus (Mouse).